Consider the following 341-residue polypeptide: Myb-related transcription factor, partner of profilin (341 aa).

Residues 8 to 80 enclose the Myb-like domain; sequence VTRLRKPRFS…EVQKRWNDFK (73 aa). Disordered stretches follow at residues 84–103, 180–210, and 309–341; these read KEKL…EEAM, LPHL…PSGV, and AEPP…WKNL. Positions 184–200 are enriched in pro residues; it reads TPSPDPSECPSPPPPGS. A compositionally biased stretch (basic residues) spans 321–341; the sequence is NKRKRFGYLSQRKRRGRWKNL.

The protein resides in the nucleus. Functionally, transcriptional repressor; DNA-binding protein that specifically recognizes the core sequence 5'-YAAC[GT]G-3'. This is Myb-related transcription factor, partner of profilin (mypop) from Xenopus laevis (African clawed frog).